A 579-amino-acid chain; its full sequence is Cytochrome P450 monooxygenase ORF6 (579 aa).

Asn-2 is a glycosylation site (N-linked (GlcNAc...) asparagine). Residues 7 to 29 traverse the membrane as a helical segment; the sequence is PLGSFVGTTLLLFILYKLVKLAY. Residues Asn-194 and Asn-390 are each glycosylated (N-linked (GlcNAc...) asparagine). Cys-512 contributes to the heme binding site.

It belongs to the cytochrome P450 family. Requires heme as cofactor.

It is found in the membrane. Its pathway is sesquiterpene biosynthesis. Its function is as follows. Cytochrome P450 monooxygenase; part of the gene cluster that mediates the biosynthesis of PR-toxin, a bicyclic sesquiterpene belonging to the eremophilane class and acting as a mycotoxin. The first step of the pathway is catalyzed by the aristolochene synthase which performs the cyclization of trans,trans-farnesyl diphosphate (FPP) to the bicyclic sesquiterpene aristolochene. Following the formation of aristolochene, the non-oxygenated aristolochene is converted to the trioxygenated intermediate eremofortin B, via 7-epi-neopetasone. This conversion appears to involve three enzymes, a hydroxysterol oxidase-like enzyme, the quinone-oxidase prx3 that forms the quinone-type-structure in the bicyclic nucleus of aristolochene with the C8-oxo group and the C-3 hydroxyl group, and the P450 monooxygenase ORF6 that introduces the epoxide at the double bond between carbons 1 and 2. No monoxy or dioxy-intermediates have been reported to be released to the broth, so these three early oxidative reactions may be coupled together. Eremofortin B is further oxidized by another P450 monooxygenase, that introduces a second epoxide between carbons 7 and 11 prior to acetylation to eremofortin A by the acetyltransferase ORF8. The second epoxidation may be performed by a second P450 monooxygenase. After the acetylation step, eremofortin A is converted to eremofortin C and then to PR-toxin. First the conversion of eremofortin A to eremofortin C proceeds by oxidation of the side chain of the molecule at C-12 and is catalyzed by the short-chain oxidoreductase prx1. The cytochrome P450 monooxygenase ORF6 is probably also involved in this step. The primary alcohol formed at C-12 is finally oxidized by the short-chain alcohol dehydrogenase prx4 that forms PR-toxin. The protein is Cytochrome P450 monooxygenase ORF6 of Penicillium roqueforti (strain FM164).